The primary structure comprises 417 residues: MAP kinase-interacting serine/threonine-protein kinase 1 (417 aa).

Positions 1–20 (MVSSQPVPIDDGGKRRKKKR) are disordered. The 285-residue stretch at 37-321 (RLTDELLGEG…AAQVLQHPWL (285 aa)) folds into the Protein kinase domain. Residues 43-51 (LGEGAYAKV) and Lys66 each bind ATP. Asp158 acts as the Proton acceptor in catalysis. Positions 397–417 (AHARKGGSHLTHTTVTSQGAT) are disordered. The segment covering 406-417 (LTHTTVTSQGAT) has biased composition (polar residues).

It belongs to the protein kinase superfamily. CAMK Ser/Thr protein kinase family. Mg(2+) serves as cofactor.

The enzyme catalyses L-seryl-[protein] + ATP = O-phospho-L-seryl-[protein] + ADP + H(+). The catalysed reaction is L-threonyl-[protein] + ATP = O-phospho-L-threonyl-[protein] + ADP + H(+). Functionally, may play a role in the response to environmental stress and cytokines. Appears to regulate translation by phosphorylating EIF4E, thus increasing the affinity of this protein for the 7-methylguanosine-containing mRNA cap. This chain is MAP kinase-interacting serine/threonine-protein kinase 1 (mknk1), found in Xenopus tropicalis (Western clawed frog).